Reading from the N-terminus, the 83-residue chain is Cytochrome c oxidase subunit 7A2, mitochondrial (83 aa).

The transit peptide at 1 to 23 (MLRNLLALRQIAQRTISTTSRRH) directs the protein to the mitochondrion. Residues 24 to 48 (FENKVPEKQKLFQEDNGMPVHLKGG) are Mitochondrial matrix-facing. K33 bears the N6-acetyllysine mark. A helical transmembrane segment spans residues 49–77 (ASDALLYRATMALTLGGTAYAIYLLAMAA). Residues 78–83 (FPKKQN) are Mitochondrial intermembrane-facing.

This sequence belongs to the cytochrome c oxidase VIIa family. As to quaternary structure, component of the cytochrome c oxidase (complex IV, CIV), a multisubunit enzyme composed of 14 subunits. The complex is composed of a catalytic core of 3 subunits MT-CO1, MT-CO2 and MT-CO3, encoded in the mitochondrial DNA, and 11 supernumerary subunits COX4I, COX5A, COX5B, COX6A, COX6B, COX6C, COX7A, COX7B, COX7C, COX8 and NDUFA4, which are encoded in the nuclear genome. The complex exists as a monomer or a dimer and forms supercomplexes (SCs) in the inner mitochondrial membrane with NADH-ubiquinone oxidoreductase (complex I, CI) and ubiquinol-cytochrome c oxidoreductase (cytochrome b-c1 complex, complex III, CIII), resulting in different assemblies (supercomplex SCI(1)III(2)IV(1) and megacomplex MCI(2)III(2)IV(2)). Interacts with PET100.

It is found in the mitochondrion inner membrane. It functions in the pathway energy metabolism; oxidative phosphorylation. Functionally, component of the cytochrome c oxidase, the last enzyme in the mitochondrial electron transport chain which drives oxidative phosphorylation. The respiratory chain contains 3 multisubunit complexes succinate dehydrogenase (complex II, CII), ubiquinol-cytochrome c oxidoreductase (cytochrome b-c1 complex, complex III, CIII) and cytochrome c oxidase (complex IV, CIV), that cooperate to transfer electrons derived from NADH and succinate to molecular oxygen, creating an electrochemical gradient over the inner membrane that drives transmembrane transport and the ATP synthase. Cytochrome c oxidase is the component of the respiratory chain that catalyzes the reduction of oxygen to water. Electrons originating from reduced cytochrome c in the intermembrane space (IMS) are transferred via the dinuclear copper A center (CU(A)) of subunit 2 and heme A of subunit 1 to the active site in subunit 1, a binuclear center (BNC) formed by heme A3 and copper B (CU(B)). The BNC reduces molecular oxygen to 2 water molecules using 4 electrons from cytochrome c in the IMS and 4 protons from the mitochondrial matrix. This chain is Cytochrome c oxidase subunit 7A2, mitochondrial (Cox7a2), found in Mus musculus (Mouse).